We begin with the raw amino-acid sequence, 90 residues long: DNA-directed RNA polymerase subunit Rpo11 (90 aa).

This sequence belongs to the archaeal Rpo11/eukaryotic RPB11/RPC19 RNA polymerase subunit family. As to quaternary structure, part of the RNA polymerase complex.

Its subcellular location is the cytoplasm. The enzyme catalyses RNA(n) + a ribonucleoside 5'-triphosphate = RNA(n+1) + diphosphate. Functionally, DNA-dependent RNA polymerase (RNAP) catalyzes the transcription of DNA into RNA using the four ribonucleoside triphosphates as substrates. This is DNA-directed RNA polymerase subunit Rpo11 from Metallosphaera sedula (strain ATCC 51363 / DSM 5348 / JCM 9185 / NBRC 15509 / TH2).